The primary structure comprises 585 residues: MQFAEFAARAAEIEAEPADLAVVSLLSDLFSDAGDDLPTVARFVQGRVFPAWDSTTLDIGPRLCHEAIARAAGPNVSADDVEDRLADRGEIGAVAASYDFGGQRGLAAFGSGEQDGLTVAEVDSELRALAAASGSGSEETKLKTLYGLFNRTDPDEARFLARLVLSEMRIGVGEGTVRDAVAEAFLVAPADAAAIRDDDADAETEAAARERRNEAIAAVARALQVSNDYGMVAGLARDEGEAGLDGVRLEVGRPVQAMLAQAGTAADALGEWGTAAVETKFDGARVQVHRDADGEVSLFSRNMEDVTDALPEVVEFVAGAVDDPVILDGEVVAMDDGGEPLPFQEILRRFRRKHDVDRMREEVRVELRAFDCLHAAGDDLLADPLAARHDRLTALLGDDSPAVSDLLLSDDPDEIAAYEADALDAGHEGIMLKNPDAPYSPGDRGKNWLKRKPDVETLDLVVTGAEWGEGRRAEFLGTFLLSARVEAESGDDAFETIGKVATGITDEELAELTDLLEPEIEREAGKEVDIRPSVVFEVGYEEIQTSPTYSSGYALRFPRFVTVREDKTAETADSLDRVERLADSQ.

Glu-278 is an ATP binding site. Lys-280 functions as the N6-AMP-lysine intermediate in the catalytic mechanism. The ATP site is built by Arg-285, Arg-301, Glu-330, Phe-370, Arg-444, and Lys-450.

The protein belongs to the ATP-dependent DNA ligase family. The cofactor is Mg(2+).

The catalysed reaction is ATP + (deoxyribonucleotide)n-3'-hydroxyl + 5'-phospho-(deoxyribonucleotide)m = (deoxyribonucleotide)n+m + AMP + diphosphate.. In terms of biological role, DNA ligase that seals nicks in double-stranded DNA during DNA replication, DNA recombination and DNA repair. This is DNA ligase from Haloferax volcanii (strain ATCC 29605 / DSM 3757 / JCM 8879 / NBRC 14742 / NCIMB 2012 / VKM B-1768 / DS2) (Halobacterium volcanii).